Consider the following 431-residue polypeptide: tRNA(Ile)-lysidine synthase (431 aa).

Residue 25 to 30 coordinates ATP; the sequence is SGGLDS.

The protein belongs to the tRNA(Ile)-lysidine synthase family.

The protein resides in the cytoplasm. It catalyses the reaction cytidine(34) in tRNA(Ile2) + L-lysine + ATP = lysidine(34) in tRNA(Ile2) + AMP + diphosphate + H(+). Functionally, ligates lysine onto the cytidine present at position 34 of the AUA codon-specific tRNA(Ile) that contains the anticodon CAU, in an ATP-dependent manner. Cytidine is converted to lysidine, thus changing the amino acid specificity of the tRNA from methionine to isoleucine. This chain is tRNA(Ile)-lysidine synthase, found in Legionella pneumophila (strain Lens).